Here is a 231-residue protein sequence, read N- to C-terminus: Enolase-phosphatase E1 (231 aa).

D11 and E13 together coordinate Mg(2+). Substrate contacts are provided by residues 125 to 126 (SS) and K162. A Mg(2+)-binding site is contributed by D188.

This sequence belongs to the HAD-like hydrolase superfamily. MasA/MtnC family. In terms of assembly, monomer. It depends on Mg(2+) as a cofactor.

Its subcellular location is the cytoplasm. The protein resides in the nucleus. The catalysed reaction is 5-methylsulfanyl-2,3-dioxopentyl phosphate + H2O = 1,2-dihydroxy-5-(methylsulfanyl)pent-1-en-3-one + phosphate. The protein operates within amino-acid biosynthesis; L-methionine biosynthesis via salvage pathway; L-methionine from S-methyl-5-thio-alpha-D-ribose 1-phosphate: step 3/6. Its pathway is amino-acid biosynthesis; L-methionine biosynthesis via salvage pathway; L-methionine from S-methyl-5-thio-alpha-D-ribose 1-phosphate: step 4/6. In terms of biological role, bifunctional enzyme that catalyzes the enolization of 2,3-diketo-5-methylthiopentyl-1-phosphate (DK-MTP-1-P) into the intermediate 2-hydroxy-3-keto-5-methylthiopentenyl-1-phosphate (HK-MTPenyl-1-P), which is then dephosphorylated to form the acireductone 1,2-dihydroxy-3-keto-5-methylthiopentene (DHK-MTPene). This chain is Enolase-phosphatase E1, found in Pyricularia oryzae (strain 70-15 / ATCC MYA-4617 / FGSC 8958) (Rice blast fungus).